A 537-amino-acid polypeptide reads, in one-letter code: Spore coat protein SP70 (537 aa).

The N-terminal stretch at 1-20 is a signal peptide; it reads MRILKLAALSCLLFIAPSLS. The region spanning 21–140 is the DSCP-N domain; that stretch reads INCDGLSKDQ…CQIPATGGGP (120 aa). The N-linked (GlcNAc...) asparagine glycan is linked to Asn97. A Follistatin-like 1 domain is found at 157–179; that stretch reads SCDKVNCPNGYICTIVNQLAVCV. Residues 183 to 246 form a disordered region; it reads SSSSSSSSTT…GSHTTTGGST (64 aa). 4 Follistatin-like domains span residues 250–272, 278–296, 358–380, and 389–415; these read TCGNVNCPRGYHCEVRGSQAVCV, SCANVDCGSGYHCKNGECI, TCKTVQCPKGYKCKLYADGPTCV, and TCKDMHCESNGLLCVLTPQKKTDEECC.

In terms of processing, phosphorylated and fucosylated.

This chain is Spore coat protein SP70 (cotB), found in Dictyostelium discoideum (Social amoeba).